The primary structure comprises 546 residues: MQLNKLMLGFMLCASALADDGQQAAEPHTSANFCKIDKDQQVGSTCDITFHELNEINEQIRPQLARLVKTDFFRYFKLDLYKECPFWSDNNGYCVNRACAVDVVDDWESVPDIWQPEVLGGLDEDSVKSEGGESDECSFLNELCGRRREFARPEPLSIDYCDVTDFTNKDSVLVDLVANPERFTGYGGEQSAQIWSAIYKENCFTLGEQGFCLAKDVFYRLISGLHASIATHLSNDYLDTKTGKWGPNLELFMARVGNHPDRVANIYFNFAVVAKALWKIQPYLERVEFCNVYDTNVKDMISNVVSRLDSRVFNEDLLFQDDISMRMKDDFRRRFKNVTKIMDCVHCDRCRMWGKVQTTGYATSLKILFEMDAGDEKARQRVVDKLTKYELIGLFNTFDRISKSVNAINNFERMYHSQMETNTSSIAAFFQNNFFRLGFTETEDQETSNATADMPLPEDSASDNEPYFADLKIPARRSKKQTKEESTSALQQELQGVYHALQFIWNSYVNLPRNLLILVLDVANTWFNNFIGVPTQINILGDDASD.

A signal peptide spans 1-18 (MQLNKLMLGFMLCASALA). 5 disulfides stabilise this stretch: C84-C344, C94-C99, C137-C161, C144-C290, and C347-C350. 6 residues coordinate FAD: R182, T184, W195, S223, H226, and R255. N-linked (GlcNAc...) asparagine glycosylation occurs at N337. The Nucleophile role is filled by C347. Residue C350 is part of the active site. N-linked (GlcNAc...) asparagine glycans are attached at residues N422 and N449.

This sequence belongs to the EROs family. In terms of assembly, may function both as a monomer and a homodimer. The cofactor is FAD.

The protein resides in the endoplasmic reticulum membrane. In terms of biological role, essential oxidoreductase that oxidizes proteins in the endoplasmic reticulum to produce disulfide bonds. Acts by oxidizing directly PDI1 isomerase through a direct disulfide exchange. Does not act as a direct oxidant of folding substrate, but relies on PDI1 to transfer oxidizing equivalent. Does not oxidize all pdi related proteins, suggesting that it can discriminate between PDI1 and related proteins. Its reoxidation probably involves electron transfer to molecular oxygen via FAD. Acts independently of glutathione. May be responsible for a significant proportion of reactive oxygen species (ROS) in the cell, thereby being a source of oxidative stress. The polypeptide is Endoplasmic reticulum oxidoreductin-1 (ERO1) (Eremothecium gossypii (strain ATCC 10895 / CBS 109.51 / FGSC 9923 / NRRL Y-1056) (Yeast)).